The following is a 128-amino-acid chain: KRAB domain-containing protein 1 (128 aa).

The KRAB domain maps to 15-86 (VAFEDVAVYF…QPQGVLSRND (72 aa)).

The sequence is that of KRAB domain-containing protein 1 (KRBOX1) from Homo sapiens (Human).